The sequence spans 278 residues: HTH-type transcriptional activator RhaS (278 aa).

The 99-residue stretch at 174 to 272 (NQLLAWLEDH…DWSPRDIRQG (99 aa)) folds into the HTH araC/xylS-type domain. 2 DNA-binding regions (H-T-H motif) span residues 191–212 (ESIA…KQQT) and 239–262 (VTDI…RREF).

As to quaternary structure, binds DNA as a dimer.

The protein localises to the cytoplasm. Its function is as follows. Activates expression of the rhaBAD and rhaT operons. The sequence is that of HTH-type transcriptional activator RhaS from Citrobacter koseri (strain ATCC BAA-895 / CDC 4225-83 / SGSC4696).